Reading from the N-terminus, the 224-residue chain is Phosphoribosyltransferase domain-containing protein 1 (224 aa).

E140 and D141 together coordinate Mg(2+). Residues 140-148 (EDIINTGRT), K172, 193-194 (FV), and D200 each bind GMP. D200 contributes to the Mg(2+) binding site.

Belongs to the purine/pyrimidine phosphoribosyltransferase family.

The chain is Phosphoribosyltransferase domain-containing protein 1 (prtfdc1) from Xenopus laevis (African clawed frog).